Consider the following 132-residue polypeptide: Small ribosomal subunit protein uS8c (132 aa).

This sequence belongs to the universal ribosomal protein uS8 family. As to quaternary structure, part of the 30S ribosomal subunit.

The protein resides in the plastid. The protein localises to the chloroplast. One of the primary rRNA binding proteins, it binds directly to 16S rRNA central domain where it helps coordinate assembly of the platform of the 30S subunit. In Platanus occidentalis (Sycamore), this protein is Small ribosomal subunit protein uS8c (rps8).